An 862-amino-acid chain; its full sequence is Glucans biosynthesis glucosyltransferase H (862 aa).

Residues 1-25 are disordered; that stretch reads MELPATSGLNAQPGNAEGTTASTRP. The segment covering 7 to 25 has biased composition (polar residues); that stretch reads SGLNAQPGNAEGTTASTRP. 5 consecutive transmembrane segments (helical) span residues 188–210, 545–567, 597–619, 626–648, and 708–730; these read RLTL…SSVL, GVMA…ALLA, ALFS…VLWA, GGAV…AAPV, and FLWW…VFSS.

Belongs to the glycosyltransferase 2 family. OpgH subfamily.

The protein resides in the cell inner membrane. The protein operates within glycan metabolism; osmoregulated periplasmic glucan (OPG) biosynthesis. In terms of biological role, involved in the biosynthesis of osmoregulated periplasmic glucans (OPGs). This Ralstonia nicotianae (strain ATCC BAA-1114 / GMI1000) (Ralstonia solanacearum) protein is Glucans biosynthesis glucosyltransferase H.